Reading from the N-terminus, the 734-residue chain is Photosystem I P700 chlorophyll a apoprotein A2 (734 aa).

The next 8 membrane-spanning stretches (helical) occupy residues 46 to 69, 135 to 158, 175 to 199, 273 to 291, 330 to 353, 369 to 395, 417 to 439, and 517 to 535; these read IFASHFGQLAIIFLWTSGNLFHVA, LYSGALFLLFLSAISLIAGWLHLQ, LNHHLSGLFGVSPLAWTGHLVHVAI, MAHHHLAIAFIFLVAGHMY, LHFQLGLALASLGVITSLVAQHMY, AALYTHHQYIAGFIMTGAFAHGAIFFI, AIISHLSWASLFLGFHTLGLYVH, and FLVHHAIALGLHTTTLILV. [4Fe-4S] cluster contacts are provided by C559 and C568. 2 helical membrane passes run 575-596 and 643-665; these read AFYLAVFWMLNTIGWVTFYWHW and LSVWAWMFLFGHLVWATGFMFLI. Positions 654, 662, and 670 each coordinate chlorophyll a. W671 is a phylloquinone binding site. A helical membrane pass occupies residues 707 to 727; that stretch reads LVGLAHFSVGYIFTYAAFLIA.

It belongs to the PsaA/PsaB family. As to quaternary structure, the PsaA/B heterodimer binds the P700 chlorophyll special pair and subsequent electron acceptors. PSI consists of a core antenna complex that captures photons, and an electron transfer chain that converts photonic excitation into a charge separation. The eukaryotic PSI reaction center is composed of at least 11 subunits. P700 is a chlorophyll a/chlorophyll a' dimer, A0 is one or more chlorophyll a, A1 is one or both phylloquinones and FX is a shared 4Fe-4S iron-sulfur center. serves as cofactor.

The protein resides in the plastid. Its subcellular location is the chloroplast thylakoid membrane. The catalysed reaction is reduced [plastocyanin] + hnu + oxidized [2Fe-2S]-[ferredoxin] = oxidized [plastocyanin] + reduced [2Fe-2S]-[ferredoxin]. In terms of biological role, psaA and PsaB bind P700, the primary electron donor of photosystem I (PSI), as well as the electron acceptors A0, A1 and FX. PSI is a plastocyanin-ferredoxin oxidoreductase, converting photonic excitation into a charge separation, which transfers an electron from the donor P700 chlorophyll pair to the spectroscopically characterized acceptors A0, A1, FX, FA and FB in turn. Oxidized P700 is reduced on the lumenal side of the thylakoid membrane by plastocyanin. The protein is Photosystem I P700 chlorophyll a apoprotein A2 of Antirrhinum majus (Garden snapdragon).